We begin with the raw amino-acid sequence, 427 residues long: Glutamyl-tRNA reductase (427 aa).

Substrate contacts are provided by residues 49-52 (TCNR), Ser-109, 114-116 (EGQ), and Gln-120. Catalysis depends on Cys-50, which acts as the Nucleophile. 188–193 (GAGKMA) contacts NADP(+).

Belongs to the glutamyl-tRNA reductase family. As to quaternary structure, homodimer.

The enzyme catalyses (S)-4-amino-5-oxopentanoate + tRNA(Glu) + NADP(+) = L-glutamyl-tRNA(Glu) + NADPH + H(+). The protein operates within porphyrin-containing compound metabolism; protoporphyrin-IX biosynthesis; 5-aminolevulinate from L-glutamyl-tRNA(Glu): step 1/2. It functions in the pathway porphyrin-containing compound metabolism; chlorophyll biosynthesis. Feedback inhibition by heme. Its function is as follows. Catalyzes the NADPH-dependent reduction of glutamyl-tRNA(Glu) to glutamate 1-semialdehyde (GSA). The protein is Glutamyl-tRNA reductase of Synechocystis sp. (strain ATCC 27184 / PCC 6803 / Kazusa).